Reading from the N-terminus, the 389-residue chain is Allantoicase (389 aa).

The protein belongs to the allantoicase family.

It carries out the reaction allantoate + H2O = (S)-ureidoglycolate + urea. Its pathway is nitrogen metabolism; (S)-allantoin degradation; (S)-ureidoglycolate from allantoate (aminidohydrolase route): step 1/1. Functionally, utilization of purines as secondary nitrogen sources, when primary sources are limiting. The chain is Allantoicase (allc) from Xenopus tropicalis (Western clawed frog).